The sequence spans 156 residues: Endoribonuclease YbeY (156 aa).

Zn(2+) contacts are provided by His122, His126, and His132.

It belongs to the endoribonuclease YbeY family. It depends on Zn(2+) as a cofactor.

The protein localises to the cytoplasm. Functionally, single strand-specific metallo-endoribonuclease involved in late-stage 70S ribosome quality control and in maturation of the 3' terminus of the 16S rRNA. This chain is Endoribonuclease YbeY, found in Bacillus cereus (strain B4264).